Reading from the N-terminus, the 146-residue chain is MAKKKVTGLIKLQIQAGQATPAPPVGPALGAHGVNIVEFTKAYNAATEAQRGNIVPVEITVYEDRSFDFKLKTPPAAKLLLKAAGIQKGSGVPHTDKVGSVTWDQCKEIATTKKEDLNANDIEAGAAIIAGTARSMGITVKDAPQK.

This sequence belongs to the universal ribosomal protein uL11 family. As to quaternary structure, part of the ribosomal stalk of the 50S ribosomal subunit. Interacts with L10 and the large rRNA to form the base of the stalk. L10 forms an elongated spine to which L12 dimers bind in a sequential fashion forming a multimeric L10(L12)X complex. Post-translationally, one or more lysine residues are methylated.

Functionally, forms part of the ribosomal stalk which helps the ribosome interact with GTP-bound translation factors. The sequence is that of Large ribosomal subunit protein uL11 from Corynebacterium jeikeium (strain K411).